We begin with the raw amino-acid sequence, 70 residues long: Small ribosomal subunit protein bS21 (70 aa).

The protein belongs to the bacterial ribosomal protein bS21 family.

This is Small ribosomal subunit protein bS21 from Nitratiruptor sp. (strain SB155-2).